Here is a 207-residue protein sequence, read N- to C-terminus: ATP synthase subunit b 2 (207 aa).

A helical transmembrane segment spans residues 53-72; the sequence is TYASQLLWLVITFSVFYLLM.

This sequence belongs to the ATPase B chain family. In terms of assembly, F-type ATPases have 2 components, F(1) - the catalytic core - and F(0) - the membrane proton channel. F(1) has five subunits: alpha(3), beta(3), gamma(1), delta(1), epsilon(1). F(0) has three main subunits: a(1), b(2) and c(10-14). The alpha and beta chains form an alternating ring which encloses part of the gamma chain. F(1) is attached to F(0) by a central stalk formed by the gamma and epsilon chains, while a peripheral stalk is formed by the delta and b chains.

Its subcellular location is the cell inner membrane. In terms of biological role, f(1)F(0) ATP synthase produces ATP from ADP in the presence of a proton or sodium gradient. F-type ATPases consist of two structural domains, F(1) containing the extramembraneous catalytic core and F(0) containing the membrane proton channel, linked together by a central stalk and a peripheral stalk. During catalysis, ATP synthesis in the catalytic domain of F(1) is coupled via a rotary mechanism of the central stalk subunits to proton translocation. Its function is as follows. Component of the F(0) channel, it forms part of the peripheral stalk, linking F(1) to F(0). The b'-subunit is a diverged and duplicated form of b found in plants and photosynthetic bacteria. This is ATP synthase subunit b 2 (atpF2) from Rhizobium leguminosarum bv. trifolii (strain WSM2304).